The chain runs to 173 residues: Ribulose bisphosphate carboxylase small subunit, chloroplastic 2 (173 aa).

The N-terminal 33 residues, 1-33 (VVLSKECAKPLATPKVTLNKRGFATTIATKNRE), are a transit peptide targeting the chloroplast.

This sequence belongs to the RuBisCO small chain family. In terms of assembly, heterohexadecamer of 8 large and 8 small subunits.

Its subcellular location is the plastid. It localises to the chloroplast. In terms of biological role, ruBisCO catalyzes two reactions: the carboxylation of D-ribulose 1,5-bisphosphate, the primary event in carbon dioxide fixation, as well as the oxidative fragmentation of the pentose substrate. Both reactions occur simultaneously and in competition at the same active site. Although the small subunit is not catalytic it is essential for maximal activity. The sequence is that of Ribulose bisphosphate carboxylase small subunit, chloroplastic 2 from Acetabularia acetabulum (Mermaid's wine glass).